We begin with the raw amino-acid sequence, 108 residues long: Thiosulfate sulfurtransferase GlpE (108 aa).

The 89-residue stretch at 17 to 105 (KDGSAALVDI…WARQYPQDVE (89 aa)) folds into the Rhodanese domain. Catalysis depends on cysteine 65, which acts as the Cysteine persulfide intermediate.

The protein belongs to the GlpE family.

Its subcellular location is the cytoplasm. The catalysed reaction is thiosulfate + hydrogen cyanide = thiocyanate + sulfite + 2 H(+). It carries out the reaction thiosulfate + [thioredoxin]-dithiol = [thioredoxin]-disulfide + hydrogen sulfide + sulfite + 2 H(+). In terms of biological role, transferase that catalyzes the transfer of sulfur from thiosulfate to thiophilic acceptors such as cyanide or dithiols. May function in a CysM-independent thiosulfate assimilation pathway by catalyzing the conversion of thiosulfate to sulfite, which can then be used for L-cysteine biosynthesis. The polypeptide is Thiosulfate sulfurtransferase GlpE (Serratia proteamaculans (strain 568)).